The chain runs to 128 residues: Sulfurtransferase TusD (128 aa).

Cysteine 78 functions as the Cysteine persulfide intermediate in the catalytic mechanism.

The protein belongs to the DsrE/TusD family. As to quaternary structure, heterohexamer, formed by a dimer of trimers. The hexameric TusBCD complex contains 2 copies each of TusB, TusC and TusD. The TusBCD complex interacts with TusE.

It localises to the cytoplasm. Functionally, part of a sulfur-relay system required for 2-thiolation of 5-methylaminomethyl-2-thiouridine (mnm(5)s(2)U) at tRNA wobble positions. Accepts sulfur from TusA and transfers it in turn to TusE. This is Sulfurtransferase TusD from Erwinia tasmaniensis (strain DSM 17950 / CFBP 7177 / CIP 109463 / NCPPB 4357 / Et1/99).